The chain runs to 69 residues: Large ribosomal subunit protein uL29 (69 aa).

Belongs to the universal ribosomal protein uL29 family.

This chain is Large ribosomal subunit protein uL29, found in Staphylococcus saprophyticus subsp. saprophyticus (strain ATCC 15305 / DSM 20229 / NCIMB 8711 / NCTC 7292 / S-41).